The chain runs to 217 residues: MGQKVHPIGMRVGIIRDWDAKWYAEKEYADYLHEDLAIRKFIQKELADAAVSTIEIERAVNKVNVSLHTAKPGMVIGKGGANVDALRAQLNKLTGKQVHINIVEIKSPDLDAHLVGENIARQLEQRVAFRRAQKQAIQRTMRAGAKGIKTQVSGRLNGADIARSEGYSEGTVPLHTLRADIDYAWEEADTTYGKLGVKVWIYRGEILPARKNTKGGK.

The 69-residue stretch at 29-97 folds into the KH type-2 domain; the sequence is ADYLHEDLAI…AQLNKLTGKQ (69 aa).

The protein belongs to the universal ribosomal protein uS3 family. Part of the 30S ribosomal subunit. Forms a tight complex with proteins S10 and S14.

Its function is as follows. Binds the lower part of the 30S subunit head. Binds mRNA in the 70S ribosome, positioning it for translation. This chain is Small ribosomal subunit protein uS3, found in Streptococcus mutans serotype c (strain ATCC 700610 / UA159).